A 172-amino-acid polypeptide reads, in one-letter code: CD164 sialomucin-like 2 protein (172 aa).

A signal peptide spans 1 to 29 (MAAPGPRALRAALCGGCCCLLLCAQLVLA). The Extracellular segment spans residues 30–137 (GKGARGFGRG…PEDHSPGFDG (108 aa)). 2 N-linked (GlcNAc...) asparagine glycosylation sites follow: N69 and N101. A disordered region spans residues 108 to 132 (ASHHHSTEEPKPSTTGSPPIPEDHS). A helical transmembrane segment spans residues 138–158 (ASFIGGIVLVLSLQATAFFVL). Topologically, residues 159–172 (RFLKAKDSTYQTLI) are cytoplasmic.

Belongs to the CD164 family.

Its subcellular location is the membrane. This Mus musculus (Mouse) protein is CD164 sialomucin-like 2 protein (Cd164l2).